The primary structure comprises 330 residues: Putative 1-aminocyclopropane-1-carboxylate deaminase (330 aa).

K54 is modified (N6-(pyridoxal phosphate)lysine).

The protein belongs to the ACC deaminase/D-cysteine desulfhydrase family. The cofactor is pyridoxal 5'-phosphate.

The enzyme catalyses 1-aminocyclopropane-1-carboxylate + H2O = 2-oxobutanoate + NH4(+). The sequence is that of Putative 1-aminocyclopropane-1-carboxylate deaminase from Pyrococcus abyssi (strain GE5 / Orsay).